A 110-amino-acid polypeptide reads, in one-letter code: Iron-sulfur cluster assembly protein CyaY (110 aa).

It belongs to the frataxin family.

Functionally, involved in iron-sulfur (Fe-S) cluster assembly. May act as a regulator of Fe-S biogenesis. In Pseudomonas fluorescens (strain SBW25), this protein is Iron-sulfur cluster assembly protein CyaY.